The primary structure comprises 857 residues: uncharacterized protein (857 aa).

Disordered stretches follow at residues 316-339 (PPAP…TKEN), 484-561 (AKQP…PRTN), 619-777 (GQFP…PKPQ), and 809-836 (EQRP…STGK). Composition is skewed to basic and acidic residues over residues 324 to 339 (PENK…TKEN), 518 to 534 (KKTE…KAEE), and 630 to 640 (QRAESSIDKDC). Positions 683-700 (RTTTVQPHSHSAQPTTLR) are enriched in polar residues. Over residues 708–725 (SSSLIASAKPAPPISSSS) the composition is skewed to low complexity. The segment covering 726–738 (TGPNVTNPNQSSA) has biased composition (polar residues). A compositionally biased stretch (basic and acidic residues) spans 809–828 (EQRPEREAMKRQAQQERENA).

This is an uncharacterized protein from Mus musculus (Mouse).